The sequence spans 309 residues: Beta-ketoacyl-[acyl-carrier-protein] synthase III (309 aa).

Active-site residues include Cys-111 and His-236. Residues 237-241 (QANVR) form an ACP-binding region. The active site involves Asn-266.

This sequence belongs to the thiolase-like superfamily. FabH family. As to quaternary structure, homodimer.

The protein resides in the cytoplasm. It carries out the reaction malonyl-[ACP] + acetyl-CoA + H(+) = 3-oxobutanoyl-[ACP] + CO2 + CoA. It participates in lipid metabolism; fatty acid biosynthesis. Its function is as follows. Catalyzes the condensation reaction of fatty acid synthesis by the addition to an acyl acceptor of two carbons from malonyl-ACP. Catalyzes the first condensation reaction which initiates fatty acid synthesis and may therefore play a role in governing the total rate of fatty acid production. Possesses both acetoacetyl-ACP synthase and acetyl transacylase activities. Its substrate specificity determines the biosynthesis of branched-chain and/or straight-chain of fatty acids. The sequence is that of Beta-ketoacyl-[acyl-carrier-protein] synthase III from Aquifex aeolicus (strain VF5).